Reading from the N-terminus, the 232-residue chain is Zinc import ATP-binding protein ZnuC (232 aa).

Residues 5–220 form the ABC transporter domain; it reads VNLKNIFVFY…PSFIEMFGCY (216 aa). Position 37 to 44 (37 to 44) interacts with ATP; the sequence is GPNGSGKS.

This sequence belongs to the ABC transporter superfamily. Zinc importer (TC 3.A.1.15.5) family. The complex is composed of two ATP-binding proteins (ZnuC), two transmembrane proteins (ZnuB) and a solute-binding protein (ZnuA).

The protein localises to the cell membrane. The enzyme catalyses Zn(2+)(out) + ATP(in) + H2O(in) = Zn(2+)(in) + ADP(in) + phosphate(in) + H(+)(in). Part of the ABC transporter complex ZnuABC involved in zinc import. Responsible for energy coupling to the transport system. This Wigglesworthia glossinidia brevipalpis protein is Zinc import ATP-binding protein ZnuC.